Reading from the N-terminus, the 530-residue chain is Regulatory protein LuxO (530 aa).

Residues Ile194 to Leu423 enclose the Sigma-54 factor interaction domain. ATP contacts are provided by residues Gly222 to Glu229 and Ala285 to Glu294.

Involved in the regulation of different processes depending on the cell density. Acts together with sigma-54 to repress, perhaps indirectly, some genes. This chain is Regulatory protein LuxO (luxO), found in Vibrio cholerae serotype O1 (strain ATCC 39541 / Classical Ogawa 395 / O395).